We begin with the raw amino-acid sequence, 405 residues long: Protein NCA1 (405 aa).

The interval 1–85 (MTTTSVCPFS…GNLNKDSTDS (85 aa)) is disordered. Basic and acidic residues-rich tracts occupy residues 13 to 24 (ARPDDGSTRKQG) and 37 to 48 (ARPDDASARKQG). The segment covering 76 to 85 (GNLNKDSTDS) has biased composition (polar residues). Residues 108–142 (CMLCQALLYESSRCVPCTHVFCKVCLTRFKDCPLC) form an RING-type zinc finger. 2 TPR repeats span residues 247–280 (GAVLGMLGDCSRAMGDSSSAVKHFEESVEFLMKL) and 292–325 (SVSLNKIGDLKYYDEDLQAARSYYDRALNVRRDA).

In terms of assembly, interacts with the catalases CAT1, CAT2 and CAT3. This interaction is not induced by alkaline stress or H(2)O(2) and NaCl treatments. Expressed in roots, stems, leaves, flowers and siliques.

It localises to the cytoplasm. The protein resides in the nucleus. Has holdase chaperone activity that may fold catalase to a functional structure. Not required for the peroxisome import of catalases. Required for the activity of catalases and acts mainly at the post-transcriptional level. The sequence is that of Protein NCA1 from Arabidopsis thaliana (Mouse-ear cress).